A 104-amino-acid polypeptide reads, in one-letter code: Zinc-containing ferredoxin-2 (104 aa).

The segment at 2-37 (GIDPNYRQNRQVVGEHEGHKIYGPVEPPGKLGIHGT) is N-terminal extension. Residues His17, His20, and His35 each coordinate Zn(2+). 4Fe-4S ferredoxin-type domains are found at residues 38 to 66 (IVGV…WFDT) and 75 to 104 (KADP…VKPP). Cys46 and Cys52 together coordinate [3Fe-4S] cluster. Cys56 lines the [4Fe-4S] cluster pocket. Zn(2+) is bound at residue Asp77. [4Fe-4S] cluster is bound by residues Cys84, Cys87, and Cys90. Cys94 contacts [3Fe-4S] cluster.

It depends on [3Fe-4S] cluster as a cofactor. The cofactor is [4Fe-4S] cluster. Zn(2+) serves as cofactor.

In terms of biological role, ferredoxins are iron-sulfur proteins that transfer electrons in a wide variety of metabolic reactions. This is Zinc-containing ferredoxin-2 (zfx2) from Sulfurisphaera tokodaii (strain DSM 16993 / JCM 10545 / NBRC 100140 / 7) (Sulfolobus tokodaii).